The following is a 142-amino-acid chain: Large ribosomal subunit protein uL16 (142 aa).

This sequence belongs to the universal ribosomal protein uL16 family. Part of the 50S ribosomal subunit.

Binds 23S rRNA and is also seen to make contacts with the A and possibly P site tRNAs. The protein is Large ribosomal subunit protein uL16 of Gemmatimonas aurantiaca (strain DSM 14586 / JCM 11422 / NBRC 100505 / T-27).